The following is a 156-amino-acid chain: Putative increased recombination centers protein 11 (156 aa).

Residues 20–42 traverse the membrane as a helical segment; that stretch reads AALGATCLLHYLTTSLSIRFFFH.

It is found in the membrane. In Saccharomyces cerevisiae (strain ATCC 204508 / S288c) (Baker's yeast), this protein is Putative increased recombination centers protein 11 (IRC11).